The following is a 118-amino-acid chain: Crustacean hyperglycemic hormones 2 (118 aa).

An N-terminal signal peptide occupies residues 1 to 22; sequence MTAFRLVAVALVVVVACSTTWA. Intrachain disulfides connect cysteine 51–cysteine 87, cysteine 67–cysteine 83, and cysteine 70–cysteine 96. Valine 116 is subject to Valine amide.

This sequence belongs to the arthropod CHH/MIH/GIH/VIH hormone family.

The protein localises to the secreted. Its function is as follows. Hormone found in the sinus gland of isopods and decapods which controls the blood sugar level. Has a secretagogue action over the amylase released from the midgut gland. May act as a stress hormone and may be involved in the control of molting and reproduction. The polypeptide is Crustacean hyperglycemic hormones 2 (CHH2) (Penaeus monodon (Giant tiger prawn)).